The sequence spans 296 residues: ATP synthase gamma chain (296 aa).

This sequence belongs to the ATPase gamma chain family. In terms of assembly, F-type ATPases have 2 components, CF(1) - the catalytic core - and CF(0) - the membrane proton channel. CF(1) has five subunits: alpha(3), beta(3), gamma(1), delta(1), epsilon(1). CF(0) has three main subunits: a, b and c.

It localises to the cell inner membrane. Its function is as follows. Produces ATP from ADP in the presence of a proton gradient across the membrane. The gamma chain is believed to be important in regulating ATPase activity and the flow of protons through the CF(0) complex. This is ATP synthase gamma chain from Methylorubrum extorquens (strain PA1) (Methylobacterium extorquens).